Reading from the N-terminus, the 156-residue chain is 3-hydroxyacyl-[acyl-carrier-protein] dehydratase FabZ (156 aa).

Residue histidine 62 is part of the active site.

It belongs to the thioester dehydratase family. FabZ subfamily.

The protein localises to the cytoplasm. The enzyme catalyses a (3R)-hydroxyacyl-[ACP] = a (2E)-enoyl-[ACP] + H2O. Involved in unsaturated fatty acids biosynthesis. Catalyzes the dehydration of short chain beta-hydroxyacyl-ACPs and long chain saturated and unsaturated beta-hydroxyacyl-ACPs. The polypeptide is 3-hydroxyacyl-[acyl-carrier-protein] dehydratase FabZ (Parasynechococcus marenigrum (strain WH8102)).